A 301-amino-acid polypeptide reads, in one-letter code: Putative S-adenosyl-L-methionine-dependent methyltransferase Mflv_5024 (301 aa).

S-adenosyl-L-methionine contacts are provided by residues D129 and 158–159; that span reads DL.

The protein belongs to the UPF0677 family.

Exhibits S-adenosyl-L-methionine-dependent methyltransferase activity. This Mycolicibacterium gilvum (strain PYR-GCK) (Mycobacterium gilvum (strain PYR-GCK)) protein is Putative S-adenosyl-L-methionine-dependent methyltransferase Mflv_5024.